A 173-amino-acid polypeptide reads, in one-letter code: C-phycocyanin beta subunit (173 aa).

Residue Asn73 is modified to N4-methylasparagine. 2 residues coordinate (2R,3E)-phycocyanobilin: Cys83 and Cys154.

The protein belongs to the phycobiliprotein family. Heterodimer of an alpha and a beta subunit. Heterodimers further assemble into trimers and the trimers into hexamers. Post-translationally, contains two covalently linked bilin chromophores.

Its subcellular location is the cellular thylakoid membrane. Light-harvesting photosynthetic bile pigment-protein from the phycobiliprotein complex (phycobilisome, PBS). Phycocyanin is the major phycobiliprotein in the PBS rod. The chain is C-phycocyanin beta subunit (cpcB) from Mastigocladus laminosus (Fischerella sp.).